Consider the following 278-residue polypeptide: Sulfate transport system permease protein CysT (278 aa).

Helical transmembrane passes span 22–42, 67–87, 102–122, 139–159, 188–208, 217–237, and 246–266; these read FTWVYLTLILFIPIIALFLKS, FGLSLAAAALNGVFGVIIAWV, FIDLPFALPTAVAGLTLATVY, IAFTRWGVLLAMVFISLPFVV, FWRVILPPILPGVLAGVAQGF, SVVIISGNLPFDDLIAPVLIF, and AGATVIGSVLLLFSLVILFVI. Residues 63 to 266 form the ABC transmembrane type-1 domain; it reads YEVTFGLSLA…LFSLVILFVI (204 aa).

This sequence belongs to the binding-protein-dependent transport system permease family. CysTW subfamily. In terms of assembly, the complex is composed of two ATP-binding proteins (CysA), two transmembrane proteins (CysT and CysW) and a solute-binding protein (CysP).

It is found in the cell inner membrane. Its function is as follows. Part of the ABC transporter complex CysAWTP (TC 3.A.1.6.1) involved in sulfate/thiosulfate import. Probably responsible for the translocation of the substrate across the membrane. This is Sulfate transport system permease protein CysT (cysT) from Synechococcus elongatus (strain ATCC 33912 / PCC 7942 / FACHB-805) (Anacystis nidulans R2).